A 1216-amino-acid polypeptide reads, in one-letter code: Apical endosomal glycoprotein (1216 aa).

An N-terminal signal peptide occupies residues 1–21 (MCLPSCLLSIWVLFMAAQSLG). At 22 to 1155 (KTWVPDHCRS…SQGRVAAPVS (1134 aa)) the chain is on the extracellular side. An LDL-receptor class A 1; truncated domain is found at 27–54 (DHCRSPTEATCNFVCDCGDCSDEAQCGF). The MAM 1 domain occupies 62-224 (NTPFTCNFEQ…DDMEFWDCGL (163 aa)). N205 is a glycosylation site (N-linked (GlcNAc...) asparagine). An LDL-receptor class A 2 domain is found at 229-269 (ARCPLGHHHCQNKACVEPHQLCDGEDNCGDSSDEDPLICSH). Intrachain disulfides connect C231/C243, C238/C256, and C250/C267. Residues 268–427 (SHHMATDFET…DLIMSNHCIL (160 aa)) enclose the MAM 2 domain. N-linked (GlcNAc...) asparagine glycans are attached at residues N291, N341, and N368. Residues 454 to 491 (RTCDAGHLSCDELCVPPEQLCDFQQHCAEGEDEEKCGT) enclose the LDL-receptor class A 3 domain. Disulfide bonds link C456–C467, C463–C480, and C474–C489. MAM domains follow at residues 492-647 (TDFE…DCNP), 654-813 (DQEV…PCWA), 812-973 (WAAK…PCAQ), and 972-1142 (AQPG…HCKQ). A glycan (N-linked (GlcNAc...) asparagine) is linked at N639. N839 carries N-linked (GlcNAc...) asparagine glycosylation. The chain crosses the membrane as a helical span at residues 1156–1176 (VPVAVGGALLLFLLLLGLGGW). At 1177–1216 (HWLQKQHLPCQSTDAAASGFDNILFNADQVTLPESITSNP) the chain is on the cytoplasmic side.

In terms of tissue distribution, apical endosomal tubules of developing rat intestinal epithelial cells.

It is found in the membrane. In terms of biological role, probably involved in the sorting and selective transport of receptors and ligands across polarized epithelia. The chain is Apical endosomal glycoprotein (Mamdc4) from Rattus norvegicus (Rat).